We begin with the raw amino-acid sequence, 449 residues long: Glucose-6-phosphate isomerase (449 aa).

The active-site Proton donor is the glutamate 290. Catalysis depends on residues histidine 311 and lysine 425.

It belongs to the GPI family.

It localises to the cytoplasm. The catalysed reaction is alpha-D-glucose 6-phosphate = beta-D-fructose 6-phosphate. The protein operates within carbohydrate biosynthesis; gluconeogenesis. It functions in the pathway carbohydrate degradation; glycolysis; D-glyceraldehyde 3-phosphate and glycerone phosphate from D-glucose: step 2/4. In terms of biological role, catalyzes the reversible isomerization of glucose-6-phosphate to fructose-6-phosphate. This Clostridium tetani (strain Massachusetts / E88) protein is Glucose-6-phosphate isomerase.